A 230-amino-acid chain; its full sequence is Large ribosomal subunit protein uL1 (230 aa).

Belongs to the universal ribosomal protein uL1 family. Part of the 50S ribosomal subunit.

Its function is as follows. Binds directly to 23S rRNA. The L1 stalk is quite mobile in the ribosome, and is involved in E site tRNA release. Functionally, protein L1 is also a translational repressor protein, it controls the translation of the L11 operon by binding to its mRNA. This is Large ribosomal subunit protein uL1 from Nitrobacter winogradskyi (strain ATCC 25391 / DSM 10237 / CIP 104748 / NCIMB 11846 / Nb-255).